Reading from the N-terminus, the 184-residue chain is Orotate phosphoribosyltransferase (184 aa).

Residues arginine 99, lysine 100, lysine 103, histidine 105, and 125–133 (EDTTTTGNS) contribute to the 5-phospho-alpha-D-ribose 1-diphosphate site. Residues threonine 129 and arginine 157 each contribute to the orotate site.

This sequence belongs to the purine/pyrimidine phosphoribosyltransferase family. PyrE subfamily. As to quaternary structure, homodimer. Requires Mg(2+) as cofactor.

The catalysed reaction is orotidine 5'-phosphate + diphosphate = orotate + 5-phospho-alpha-D-ribose 1-diphosphate. Its pathway is pyrimidine metabolism; UMP biosynthesis via de novo pathway; UMP from orotate: step 1/2. In terms of biological role, catalyzes the transfer of a ribosyl phosphate group from 5-phosphoribose 1-diphosphate to orotate, leading to the formation of orotidine monophosphate (OMP). This Corynebacterium glutamicum (strain ATCC 13032 / DSM 20300 / JCM 1318 / BCRC 11384 / CCUG 27702 / LMG 3730 / NBRC 12168 / NCIMB 10025 / NRRL B-2784 / 534) protein is Orotate phosphoribosyltransferase.